Consider the following 80-residue polypeptide: U20-ctenitoxin-Pn1a (80 aa).

7 cysteine pairs are disulfide-bonded: Cys-3–Cys-20, Cys-10–Cys-26, Cys-17–Cys-52, Cys-19–Cys-40, Cys-28–Cys-38, Cys-58–Cys-71, and Cys-75–Cys-80.

In terms of tissue distribution, expressed by the venom gland.

The protein resides in the secreted. Functionally, omega-agatoxin are antagonists of voltage-gated calcium channels (Cav). Induces rapid general flaccid paralysis followed by death when injected into the cerebral ventricle of mice at dose levels of 3 ug per mouse. This Phoneutria nigriventer (Brazilian armed spider) protein is U20-ctenitoxin-Pn1a.